A 441-amino-acid chain; its full sequence is MFDTIAAVSSPHGTGAIAVIRIDGPKSHDIAKKLTGLNKVEYRRVYTTYLNFEGDILDQVNIVFFKSPNSYTGNDLIEIYTHGGILVTQNVLDAILKSGARIAKRGEFTKRGFLNGKISLVQAEAIYQIIEAKSEVSLKMSLQNLKGKLGEEIEYYRGEILNVLSEIEVTFDYPDDIELDEKSILNLLSKLKDEVGRKIEDSKKSIMLNNGIVMTIVGKPNSGKSTLLNRLLLEDRAIVTDIPGTTRDVIKGEIEINGIRFVIVDTAGIRETKDVVEKIGIERSLKEIQKADVILFVLDATTGFTKEDKLILRKIEGGNYIPVWNKCDEGNNFNKIFDGEIKISALNGEGLKNLENKIVSKVKNIIESGTASHVITQRQVEILERVYTHLESAVNNLNMGYEIDLISIDLRRALEELDMLIGRKFSDDLLDNIFSNFCVGK.

Residues arginine 21, glutamate 78, and lysine 117 each contribute to the (6S)-5-formyl-5,6,7,8-tetrahydrofolate site. Residues 211 to 363 (GIVMTIVGKP…LENKIVSKVK (153 aa)) form the TrmE-type G domain. Asparagine 221 contacts K(+). Residues 221 to 226 (NSGKST), 240 to 246 (TDIPGTT), and 265 to 268 (DTAG) contribute to the GTP site. Serine 225 serves as a coordination point for Mg(2+). K(+) is bound by residues threonine 240, isoleucine 242, and threonine 245. Threonine 246 lines the Mg(2+) pocket. Residue lysine 441 participates in (6S)-5-formyl-5,6,7,8-tetrahydrofolate binding.

The protein belongs to the TRAFAC class TrmE-Era-EngA-EngB-Septin-like GTPase superfamily. TrmE GTPase family. In terms of assembly, homodimer. Heterotetramer of two MnmE and two MnmG subunits. The cofactor is K(+).

The protein localises to the cytoplasm. Exhibits a very high intrinsic GTPase hydrolysis rate. Involved in the addition of a carboxymethylaminomethyl (cmnm) group at the wobble position (U34) of certain tRNAs, forming tRNA-cmnm(5)s(2)U34. This Thermosipho melanesiensis (strain DSM 12029 / CIP 104789 / BI429) protein is tRNA modification GTPase MnmE.